The chain runs to 147 residues: uncharacterized protein (147 aa).

The chain crosses the membrane as a helical span at residues 3 to 23 (APMVGMVVLVVTLGAAVLALS).

It to M.tuberculosis Rv1312.

It is found in the membrane. This is an uncharacterized protein from Mycobacterium leprae (strain TN).